Consider the following 715-residue polypeptide: Fatty acid oxidation complex subunit alpha (715 aa).

Residues 1–190 (MTTTSAFMLN…KAGLVDDVVP (190 aa)) are enoyl-CoA hydratase. The interval 306 to 714 (GPLNSVGILG…FWTNGETDQG (409 aa)) is 3-hydroxyacyl-CoA dehydrogenase.

It in the N-terminal section; belongs to the enoyl-CoA hydratase/isomerase family. This sequence in the central section; belongs to the 3-hydroxyacyl-CoA dehydrogenase family. Heterotetramer of two alpha chains (FadJ) and two beta chains (FadI).

Its subcellular location is the cytoplasm. It carries out the reaction a (3S)-3-hydroxyacyl-CoA = a (2E)-enoyl-CoA + H2O. It catalyses the reaction a 4-saturated-(3S)-3-hydroxyacyl-CoA = a (3E)-enoyl-CoA + H2O. The enzyme catalyses a (3S)-3-hydroxyacyl-CoA + NAD(+) = a 3-oxoacyl-CoA + NADH + H(+). The catalysed reaction is (3S)-3-hydroxybutanoyl-CoA = (3R)-3-hydroxybutanoyl-CoA. It functions in the pathway lipid metabolism; fatty acid beta-oxidation. Functionally, catalyzes the formation of a hydroxyacyl-CoA by addition of water on enoyl-CoA. Also exhibits 3-hydroxyacyl-CoA epimerase and 3-hydroxyacyl-CoA dehydrogenase activities. The sequence is that of Fatty acid oxidation complex subunit alpha from Salmonella typhimurium (strain LT2 / SGSC1412 / ATCC 700720).